We begin with the raw amino-acid sequence, 445 residues long: Tubulin beta-4 chain (445 aa).

GTP contacts are provided by glutamine 11, glutamate 69, serine 138, glycine 142, threonine 143, glycine 144, asparagine 204, and asparagine 226. Glutamate 69 contributes to the Mg(2+) binding site. Positions 421-445 (EYQQYQDATADEEYDEEEEEERDAE) are disordered. The span at 429–445 (TADEEYDEEEEEERDAE) shows a compositional bias: acidic residues.

It belongs to the tubulin family. Dimer of alpha and beta chains. A typical microtubule is a hollow water-filled tube with an outer diameter of 25 nm and an inner diameter of 15 nM. Alpha-beta heterodimers associate head-to-tail to form protofilaments running lengthwise along the microtubule wall with the beta-tubulin subunit facing the microtubule plus end conferring a structural polarity. Microtubules usually have 13 protofilaments but different protofilament numbers can be found in some organisms and specialized cells. Mg(2+) is required as a cofactor.

Its subcellular location is the cytoplasm. The protein resides in the cytoskeleton. Its function is as follows. Tubulin is the major constituent of microtubules, a cylinder consisting of laterally associated linear protofilaments composed of alpha- and beta-tubulin heterodimers. Microtubules grow by the addition of GTP-tubulin dimers to the microtubule end, where a stabilizing cap forms. Below the cap, tubulin dimers are in GDP-bound state, owing to GTPase activity of alpha-tubulin. This Triticum aestivum (Wheat) protein is Tubulin beta-4 chain (TUBB4).